A 269-amino-acid chain; its full sequence is 4-hydroxy-tetrahydrodipicolinate reductase (269 aa).

NAD(+) contacts are provided by residues 10-15 (GANGRM), Glu36, 99-101 (GTT), and 123-126 (AANF). His156 functions as the Proton donor/acceptor in the catalytic mechanism. His157 lines the (S)-2,3,4,5-tetrahydrodipicolinate pocket. The active-site Proton donor is the Lys160. A (S)-2,3,4,5-tetrahydrodipicolinate-binding site is contributed by 166–167 (GT).

This sequence belongs to the DapB family.

Its subcellular location is the cytoplasm. The catalysed reaction is (S)-2,3,4,5-tetrahydrodipicolinate + NAD(+) + H2O = (2S,4S)-4-hydroxy-2,3,4,5-tetrahydrodipicolinate + NADH + H(+). The enzyme catalyses (S)-2,3,4,5-tetrahydrodipicolinate + NADP(+) + H2O = (2S,4S)-4-hydroxy-2,3,4,5-tetrahydrodipicolinate + NADPH + H(+). It functions in the pathway amino-acid biosynthesis; L-lysine biosynthesis via DAP pathway; (S)-tetrahydrodipicolinate from L-aspartate: step 4/4. In terms of biological role, catalyzes the conversion of 4-hydroxy-tetrahydrodipicolinate (HTPA) to tetrahydrodipicolinate. This chain is 4-hydroxy-tetrahydrodipicolinate reductase, found in Neisseria meningitidis serogroup C (strain 053442).